The primary structure comprises 214 residues: Cdc42 effector protein 2 (214 aa).

S2 bears the N-acetylserine mark. The CRIB domain occupies 30 to 44 (ISPPLGDFRHTIHIG). 5 positions are modified to phosphoserine: S31, S101, S137, S141, and S145. Residues 119 to 177 (LTLPTAQAPPKPPRLHLESPQPSPQPSPQGAGNVDVWRIPEAGSPHNGMSPEPEAEEPF) form a disordered region.

Belongs to the BORG/CEP family. In terms of assembly, interacts with CDC42 and RHOQ in a GTP-dependent manner, and with SEPT7.

The protein resides in the endomembrane system. It localises to the cytoplasm. It is found in the cytoskeleton. Probably involved in the organization of the actin cytoskeleton. May act downstream of CDC42 to induce actin filament assembly leading to cell shape changes. Induces pseudopodia formation in fibroblasts in a CDC42-dependent manner. The sequence is that of Cdc42 effector protein 2 (Cdc42ep2) from Mus musculus (Mouse).